The primary structure comprises 380 residues: Crotonobetainyl-CoA reductase (380 aa).

The protein belongs to the acyl-CoA dehydrogenase family. As to quaternary structure, homotetramer. FAD serves as cofactor.

Its subcellular location is the cytoplasm. It carries out the reaction 4-(trimethylamino)butanoyl-CoA + oxidized [electron-transfer flavoprotein] + H(+) = crotonobetainyl-CoA + reduced [electron-transfer flavoprotein]. Its pathway is amine and polyamine metabolism; carnitine metabolism. Catalyzes the reduction of crotonobetainyl-CoA to gamma-butyrobetainyl-CoA. This chain is Crotonobetainyl-CoA reductase, found in Escherichia coli (strain UTI89 / UPEC).